An 859-amino-acid polypeptide reads, in one-letter code: Autoinducer 2 sensor kinase/phosphatase LuxQ (859 aa).

Helical transmembrane passes span 15–35 and 280–300; these read ATLI…GIFI and IQHI…ALMS. One can recognise a Histidine kinase domain in the interval 489 to 711; sequence KMSHEIRTPI…TFVITLPVKD (223 aa). Phosphohistidine; by autocatalysis is present on histidine 492. Residues 736–851 form the Response regulatory domain; sequence KVLLVEDNHT…ALHEAFVDFK (116 aa). 4-aspartylphosphate is present on aspartate 785.

As to quaternary structure, binds the complex formed by AI-2 and LuxP.

The protein localises to the cell inner membrane. It catalyses the reaction ATP + protein L-histidine = ADP + protein N-phospho-L-histidine.. In terms of biological role, at low cell density, in absence of AI-2 (autoinducer 2), LuxQ has a kinase activity and autophosphorylates on a histidine residue. The phosphoryl group is then transferred to an aspartate residue in the response regulator domain. The phosphoryl group is transferred to LuxU, and ultimately to LuxO. At high cell density, in the presence of AI-2, the kinase activity is inactivated, and the response regulator domain has a phosphatase activity. The sequence is that of Autoinducer 2 sensor kinase/phosphatase LuxQ (luxQ) from Vibrio harveyi (Beneckea harveyi).